The chain runs to 820 residues: DNA mismatch repair protein MutS (820 aa).

An ATP-binding site is contributed by 618–625; the sequence is GPNMAGKS.

It belongs to the DNA mismatch repair MutS family.

This protein is involved in the repair of mismatches in DNA. It is possible that it carries out the mismatch recognition step. This protein has a weak ATPase activity. The polypeptide is DNA mismatch repair protein MutS (Chlamydia trachomatis serovar L2b (strain UCH-1/proctitis)).